Here is a 473-residue protein sequence, read N- to C-terminus: FAD-dependent monooxygeanse terM (473 aa).

Residues 1–22 form the signal peptide; the sequence is MSENFKVLIIGGSVAGLTLALC. E34, G48, R107, D303, and A316 together coordinate FAD. A helical transmembrane segment spans residues 441 to 461; that stretch reads VLYLICGALLAWWASGLVWHF.

It belongs to the paxM FAD-dependent monooxygenase family. FAD is required as a cofactor.

It is found in the membrane. It participates in secondary metabolite biosynthesis. In terms of biological role, FAD-dependent monooxygeanse; part of the gene cluster that mediates the biosynthesis of terpendoles, indole-diterpene (IDT) mycotoxins including terpendole I, terpendole K, terpendole C, as well as the kinesin Eg5 inhibitor terpendole E. Terpendoles biosynthesis begins with the synthesis of geranylgeranyl diphosphate (GGPP) by a yet unidentified GGPP synthase. Condensation of indole-3-glycerol phosphate with GGPP by the prenyltransferase terC then forms 3-geranylgeranylindole (3-GGI), followed by epoxidation and cyclization of this intermediate (by the FAD-dependent monooxygeanse terM and the terpene cyclase terB) to form paspaline. The cytochrome monooxygenase terQ then hydroxylates paspalline at C-11 to yield terpendole E. The cytochrome monooxygenase terP converts terpendole E to 13-desoxyterpendole I, and terQ converts 13-desoxyterpendole I into terpendole I. TerF and terK are required for conversion of terpendole I to terpendole C which is further converted to terpendole K. The sequence is that of FAD-dependent monooxygeanse terM from Tolypocladium album (Soil fungus).